Consider the following 602-residue polypeptide: MFGYLQLINPTTDIYIKDYGNFSGIVAHQAYDPVRRDHMLLRSMKLHFGPNSKLLWLGDFHAITLSHANMIFGASSVGFKGVNVSTLPPDTLTTGIRPRPVVTMDFAQLKGFYSDLAQKEDYIMYFHDMVKFVSQTGGAPVSLRDVFLWISESVTGPVVIRTDCVTGCNNLWPSGSGHFYFPYERKTKFRYGTFVECGKNLTWSEGPQWDVKSYVVGFNFVTRANSLLGGGFDEVCYRLMMQAEVPRQVAEQGLTLEQAVRKLASEHHMSRPQLTSRRVPGITDQTKYEAYVVCGPFRTGQVVADSLQMAEDLAWREMLGTLKTLIHDEARQTKGCCXRCWPGELYLINIESAGFREGASAAAAYQAGFLRAFYGCLNTSVCSFSSLDDGLRWLCTRLSTKSIGAKGRTVVLFGCHSEGEVLADGFGKTYSAAEAREQVALSGKIGGSAQVIVVWQRCRESKLQRLLPELAMVSYVPEEVVAGFKRVRELETYPQWCLWLYRSMIESMGGIDVGVRDASPLTESGVVYQVEAAQYGMRTTRVRRADGTLDYQGLSWTSLLMLLLGHYGADQTYEALRVSSMFIRAREVGWRKRGTFSCIVST.

It is found in the host cytoplasm. This is Non structural protein VP9' from Callospermophilus lateralis (Golden-mantled ground squirrel).